The chain runs to 380 residues: Cytochrome b (380 aa).

The next 4 helical transmembrane spans lie at 33-53 (FGSL…FLAM), 77-98 (WLIR…YLHI), 113-133 (WNVG…GYVL), and 178-198 (FFAF…IHLI). His-83 and His-97 together coordinate heme b. His-182 and His-196 together coordinate heme b. Residue His-201 participates in a ubiquinone binding. The next 4 membrane-spanning stretches (helical) occupy residues 226–246 (YKDL…ALFS), 288–308 (LGGV…PILH), 320–340 (FSQF…WIGG), and 347–367 (FVII…VMIP).

The protein belongs to the cytochrome b family. As to quaternary structure, the cytochrome bc1 complex contains 3 respiratory subunits (MT-CYB, CYC1 and UQCRFS1), 2 core proteins (UQCRC1 and UQCRC2) and probably 6 low-molecular weight proteins. Requires heme b as cofactor.

It localises to the mitochondrion inner membrane. Its function is as follows. Component of the ubiquinol-cytochrome c reductase complex (complex III or cytochrome b-c1 complex) that is part of the mitochondrial respiratory chain. The b-c1 complex mediates electron transfer from ubiquinol to cytochrome c. Contributes to the generation of a proton gradient across the mitochondrial membrane that is then used for ATP synthesis. This is Cytochrome b (mt-cyb) from Paralichthys olivaceus (Bastard halibut).